The chain runs to 707 residues: DNA topoisomerase 1 (707 aa).

A Toprim domain is found at 1-140; it reads MYAILAEKPS…IKRLWTSSMT (140 aa). The region spanning 157–596 is the Topo IA-type catalytic domain; sequence TLPLYYQAKA…HSKKLSSVLF (440 aa). The interval 199–204 is interaction with DNA; it reads SLGRVQ. Y323 serves as the catalytic O-(5'-phospho-DNA)-tyrosine intermediate.

It belongs to the type IA topoisomerase family. In terms of assembly, monomer.

The enzyme catalyses ATP-independent breakage of single-stranded DNA, followed by passage and rejoining.. Releases the supercoiling and torsional tension of DNA, which is introduced during the DNA replication and transcription, by transiently cleaving and rejoining one strand of the DNA duplex. Introduces a single-strand break via transesterification at a target site in duplex DNA. The scissile phosphodiester is attacked by the catalytic tyrosine of the enzyme, resulting in the formation of a DNA-(5'-phosphotyrosyl)-enzyme intermediate and the expulsion of a 3'-OH DNA strand. The free DNA strand then undergoes passage around the unbroken strand, thus removing DNA supercoils. Finally, in the religation step, the DNA 3'-OH attacks the covalent intermediate to expel the active-site tyrosine and restore the DNA phosphodiester backbone. This Alkalihalophilus pseudofirmus (strain ATCC BAA-2126 / JCM 17055 / OF4) (Bacillus pseudofirmus) protein is DNA topoisomerase 1 (topA).